Reading from the N-terminus, the 192-residue chain is Peptidyl-tRNA hydrolase (192 aa).

His17 serves as a coordination point for tRNA. His22 (proton acceptor) is an active-site residue. TRNA-binding residues include Phe68, Asn70, and Asn116.

Belongs to the PTH family. As to quaternary structure, monomer.

It is found in the cytoplasm. It carries out the reaction an N-acyl-L-alpha-aminoacyl-tRNA + H2O = an N-acyl-L-amino acid + a tRNA + H(+). Functionally, hydrolyzes ribosome-free peptidyl-tRNAs (with 1 or more amino acids incorporated), which drop off the ribosome during protein synthesis, or as a result of ribosome stalling. In terms of biological role, catalyzes the release of premature peptidyl moieties from peptidyl-tRNA molecules trapped in stalled 50S ribosomal subunits, and thus maintains levels of free tRNAs and 50S ribosomes. In Stenotrophomonas maltophilia (strain K279a), this protein is Peptidyl-tRNA hydrolase.